A 616-amino-acid polypeptide reads, in one-letter code: Chaperone protein HscA (616 aa).

The protein belongs to the heat shock protein 70 family.

In terms of biological role, chaperone involved in the maturation of iron-sulfur cluster-containing proteins. Has a low intrinsic ATPase activity which is markedly stimulated by HscB. Involved in the maturation of IscU. This is Chaperone protein HscA from Salmonella enteritidis PT4 (strain P125109).